The sequence spans 146 residues: 3-dehydroquinate dehydratase (146 aa).

Catalysis depends on Y24, which acts as the Proton acceptor. Substrate-binding residues include N73, H79, and D86. The active-site Proton donor is H99. Substrate-binding positions include 100–101 (LS) and R110.

The protein belongs to the type-II 3-dehydroquinase family. In terms of assembly, homododecamer.

It carries out the reaction 3-dehydroquinate = 3-dehydroshikimate + H2O. Its pathway is metabolic intermediate biosynthesis; chorismate biosynthesis; chorismate from D-erythrose 4-phosphate and phosphoenolpyruvate: step 3/7. In terms of biological role, catalyzes a trans-dehydration via an enolate intermediate. This chain is 3-dehydroquinate dehydratase, found in Shewanella baltica (strain OS185).